The chain runs to 200 residues: Large ribosomal subunit protein uL4 (200 aa).

Residues 43-71 (RAQKTRAEVSGSGKKPWRQKGTGRARSGD) are disordered.

The protein belongs to the universal ribosomal protein uL4 family. Part of the 50S ribosomal subunit.

Its function is as follows. One of the primary rRNA binding proteins, this protein initially binds near the 5'-end of the 23S rRNA. It is important during the early stages of 50S assembly. It makes multiple contacts with different domains of the 23S rRNA in the assembled 50S subunit and ribosome. In terms of biological role, forms part of the polypeptide exit tunnel. This is Large ribosomal subunit protein uL4 from Mannheimia succiniciproducens (strain KCTC 0769BP / MBEL55E).